We begin with the raw amino-acid sequence, 585 residues long: MNLFTDFEARINRILESIDVIREKRSELDFRRINVEPPRDASHGDVATNAAMVLAKPLGMNPRALADLIGDKLAQDPEVAEVSVAGPGFINVRLSVSYWQKLLAVITRAGVDYGRSALGAGRKINVEYVSANPTGPMHVGHCRGAVVGDALANLLAFSGFDVTKEYYINDAGSQIEVLARSAFLRYRQALGEDIGEIPAGLYPGDYLVPAGEALADEYGTSLRIMPEDKWMPLVKERVIDAMMAMIREDLAALNVNHDVFFSERALHDNGAARIRTAINDLTFKGHVYKGMLPPPKGQLPEDWEDREQTLFRSTEVGDDIDRPLIKSDGSYTYFAADVAYFKDKFDRGFDEMIYVLGADHGGYVKRLEALARAISGGSAKLTVLLCQLVKLYRNGEPVKMSKRSGDFVTLREVVDEVGRDPVRFMMLYRKSSEPLDFDFAKVTEQSKDNPVFYVQYAHARCRSVFRQAAEAFPDLDLSSIDLAGAAGAIADPTEMQLVAKLAEYPRVVEAAAFSHEPHRIAFYLYDLAAVFHGHWNKGKENPALRFVNDKNRELSIARLGLVHAVASVLKSGLSITGTSAPDEMR.

Residues 131–141 (ANPTGPMHVGH) carry the 'HIGH' region motif.

It belongs to the class-I aminoacyl-tRNA synthetase family. In terms of assembly, monomer.

The protein resides in the cytoplasm. The catalysed reaction is tRNA(Arg) + L-arginine + ATP = L-arginyl-tRNA(Arg) + AMP + diphosphate. This Sinorhizobium medicae (strain WSM419) (Ensifer medicae) protein is Arginine--tRNA ligase.